The sequence spans 119 residues: MVQENKNFATAQAKSIRVSSRKLNLVAAFIRNMKVSEALVQLTFSPKRIAKVVKDCLQSAVANAENNLGLDIDRLVITKAIVGKALVMKRVMPRAKGRATRINKFFSNLYITVTEKEDN.

It belongs to the universal ribosomal protein uL22 family. Part of the 50S ribosomal subunit.

This protein binds specifically to 23S rRNA; its binding is stimulated by other ribosomal proteins, e.g. L4, L17, and L20. It is important during the early stages of 50S assembly. It makes multiple contacts with different domains of the 23S rRNA in the assembled 50S subunit and ribosome. Functionally, the globular domain of the protein is located near the polypeptide exit tunnel on the outside of the subunit, while an extended beta-hairpin is found that lines the wall of the exit tunnel in the center of the 70S ribosome. The protein is Large ribosomal subunit protein uL22 of Rickettsia peacockii (strain Rustic).